The chain runs to 344 residues: GTPase Obg (344 aa).

An Obg domain is found at 1–159 (MKFLDLAKVY…RTIWLRLKLI (159 aa)). The OBG-type G domain maps to 160–326 (ADVGLLGLPN…VLRVLRARVD (167 aa)). Residues 166 to 173 (GLPNAGKS), 191 to 195 (FTTLV), 212 to 215 (DIPG), 279 to 282 (NKID), and 307 to 309 (SGV) each bind GTP. Residues serine 173 and threonine 193 each contribute to the Mg(2+) site.

This sequence belongs to the TRAFAC class OBG-HflX-like GTPase superfamily. OBG GTPase family. As to quaternary structure, monomer. Requires Mg(2+) as cofactor.

It localises to the cytoplasm. In terms of biological role, an essential GTPase which binds GTP, GDP and possibly (p)ppGpp with moderate affinity, with high nucleotide exchange rates and a fairly low GTP hydrolysis rate. Plays a role in control of the cell cycle, stress response, ribosome biogenesis and in those bacteria that undergo differentiation, in morphogenesis control. This chain is GTPase Obg, found in Jannaschia sp. (strain CCS1).